The primary structure comprises 227 residues: MTLSLFDQFSSPSFLGIPMILMALALPWLLIPTPTSRWLSNRVVSLQGWFIARFTNQLFLPLNVGGHKWAPLLASLMMFLLTLNMLGLMPYIFTPTTQLSLNLGLAVPLWLATVLIGMRNQPTHALGHFLPEGTPTALIPILIIMQTISLFIRPLALGVRLTANLTAGHLLIHLISSAVFVLMPMMPVVAILTAVLLLLLTMLEVAVAMIQAYVFILLLSLYLQENV.

Helical transmembrane passes span 14-34 (FLGI…IPTP), 73-93 (LASL…PYIF), 98-118 (QLSL…LIGM), 137-157 (ALIP…PLAL), 179-199 (VFVL…LLLL), and 203-223 (LEVA…SLYL).

It belongs to the ATPase A chain family. In terms of assembly, component of the ATP synthase complex composed at least of ATP5F1A/subunit alpha, ATP5F1B/subunit beta, ATP5MC1/subunit c (homooctomer), MT-ATP6/subunit a, MT-ATP8/subunit 8, ATP5ME/subunit e, ATP5MF/subunit f, ATP5MG/subunit g, ATP5MK/subunit k, ATP5MJ/subunit j, ATP5F1C/subunit gamma, ATP5F1D/subunit delta, ATP5F1E/subunit epsilon, ATP5PF/subunit F6, ATP5PB/subunit b, ATP5PD/subunit d, ATP5PO/subunit OSCP. ATP synthase complex consists of a soluble F(1) head domain (subunits alpha(3) and beta(3)) - the catalytic core - and a membrane F(0) domain - the membrane proton channel (subunits c, a, 8, e, f, g, k and j). These two domains are linked by a central stalk (subunits gamma, delta, and epsilon) rotating inside the F1 region and a stationary peripheral stalk (subunits F6, b, d, and OSCP). Interacts with DNAJC30; interaction is direct.

Its subcellular location is the mitochondrion inner membrane. It catalyses the reaction H(+)(in) = H(+)(out). Functionally, subunit a, of the mitochondrial membrane ATP synthase complex (F(1)F(0) ATP synthase or Complex V) that produces ATP from ADP in the presence of a proton gradient across the membrane which is generated by electron transport complexes of the respiratory chain. ATP synthase complex consist of a soluble F(1) head domain - the catalytic core - and a membrane F(1) domain - the membrane proton channel. These two domains are linked by a central stalk rotating inside the F(1) region and a stationary peripheral stalk. During catalysis, ATP synthesis in the catalytic domain of F(1) is coupled via a rotary mechanism of the central stalk subunits to proton translocation. With the subunit c (ATP5MC1), forms the proton-conducting channel in the F(0) domain, that contains two crucial half-channels (inlet and outlet) that facilitate proton movement from the mitochondrial intermembrane space (IMS) into the matrix. Protons are taken up via the inlet half-channel and released through the outlet half-channel, following a Grotthuss mechanism. The sequence is that of ATP synthase F(0) complex subunit a from Gadus morhua (Atlantic cod).